The primary structure comprises 458 residues: NALCN channel auxiliary factor 1 (458 aa).

Residues 40–60 (LSLASLLFFTVLLSDHLWFCA) form a helical membrane-spanning segment. The interval 70 to 155 (KEHQQQQRQQ…NRGKDDRGKA (86 aa)) is disordered. Residues 75-96 (QQRQQQQQQQQQRQRQQQQQQR) show a composition bias toward low complexity. A compositionally biased stretch (gly residues) spans 136–145 (GDGGGGGGKG). 7 cysteine pairs are disulfide-bonded: Cys191/Cys261, Cys226/Cys313, Cys246/Cys261, Cys304/Cys341, Cys324/Cys377, Cys330/Cys376, and Cys334/Cys361. The N-linked (GlcNAc...) asparagine glycan is linked to Asn217. A helical membrane pass occupies residues 417-437 (LKLCVLVLILLHTVLTASAAQ).

The protein belongs to the NALF family. As to quaternary structure, component of the NALCN channel complex. NALCN complex consists of NALCN and auxiliary subunits, UNC79, UNC80 and NACL1. These auxiliary subunits are essential for the NALCN channel function.

Its subcellular location is the cell membrane. Its function is as follows. Auxillary component of the NALCN sodium channel complex, a channel that regulates the resting membrane potential and controls neuronal excitability. This is NALCN channel auxiliary factor 1 from Homo sapiens (Human).